Consider the following 178-residue polypeptide: Nicotinamide-nucleotide adenylyltransferase (178 aa).

Belongs to the archaeal NMN adenylyltransferase family.

The protein localises to the cytoplasm. It carries out the reaction beta-nicotinamide D-ribonucleotide + ATP + H(+) = diphosphate + NAD(+). It functions in the pathway cofactor biosynthesis; NAD(+) biosynthesis; NAD(+) from nicotinamide D-ribonucleotide: step 1/1. The protein is Nicotinamide-nucleotide adenylyltransferase of Thermoplasma volcanium (strain ATCC 51530 / DSM 4299 / JCM 9571 / NBRC 15438 / GSS1).